Reading from the N-terminus, the 232-residue chain is Urease accessory protein UreF (232 aa).

Belongs to the UreF family. UreD, UreF and UreG form a complex that acts as a GTP-hydrolysis-dependent molecular chaperone, activating the urease apoprotein by helping to assemble the nickel containing metallocenter of UreC. The UreE protein probably delivers the nickel.

The protein localises to the cytoplasm. In terms of biological role, required for maturation of urease via the functional incorporation of the urease nickel metallocenter. The sequence is that of Urease accessory protein UreF from Azorhizobium caulinodans (strain ATCC 43989 / DSM 5975 / JCM 20966 / LMG 6465 / NBRC 14845 / NCIMB 13405 / ORS 571).